The chain runs to 425 residues: Serine--tRNA ligase (425 aa).

Threonine 231 to glutamate 233 lines the L-serine pocket. ATP contacts are provided by residues arginine 262–glutamate 264 and valine 278. Glutamate 285 contributes to the L-serine binding site. Glutamate 349–serine 352 contributes to the ATP binding site. Threonine 384 is a binding site for L-serine.

Belongs to the class-II aminoacyl-tRNA synthetase family. Type-1 seryl-tRNA synthetase subfamily. In terms of assembly, homodimer. The tRNA molecule binds across the dimer.

The protein resides in the cytoplasm. It catalyses the reaction tRNA(Ser) + L-serine + ATP = L-seryl-tRNA(Ser) + AMP + diphosphate + H(+). The enzyme catalyses tRNA(Sec) + L-serine + ATP = L-seryl-tRNA(Sec) + AMP + diphosphate + H(+). It functions in the pathway aminoacyl-tRNA biosynthesis; selenocysteinyl-tRNA(Sec) biosynthesis; L-seryl-tRNA(Sec) from L-serine and tRNA(Sec): step 1/1. Catalyzes the attachment of serine to tRNA(Ser). Is also able to aminoacylate tRNA(Sec) with serine, to form the misacylated tRNA L-seryl-tRNA(Sec), which will be further converted into selenocysteinyl-tRNA(Sec). The protein is Serine--tRNA ligase of Dictyoglomus turgidum (strain DSM 6724 / Z-1310).